The sequence spans 174 residues: MIQYLQVGKIVNTHGIKGEVKAIPLTDNPRRFNKLKWAYVSKEISNEMPKFDIVSVKHHKNFVILKFSGIDDMNAAEKLKEHFVIIDRKDAVKLPKDTFFICDLIGMNVFDTEEKKLGVLTDVLSTGSNDVYVVKSDNNKEILIPALKSVVKKVCFEDNKMVVDLPQGLIDDEV.

Positions 96-169 (KDTFFICDLI…KMVVDLPQGL (74 aa)) constitute a PRC barrel domain.

The protein belongs to the RimM family. In terms of assembly, binds ribosomal protein uS19.

The protein localises to the cytoplasm. Its function is as follows. An accessory protein needed during the final step in the assembly of 30S ribosomal subunit, possibly for assembly of the head region. Essential for efficient processing of 16S rRNA. May be needed both before and after RbfA during the maturation of 16S rRNA. It has affinity for free ribosomal 30S subunits but not for 70S ribosomes. In Acetivibrio thermocellus (strain ATCC 27405 / DSM 1237 / JCM 9322 / NBRC 103400 / NCIMB 10682 / NRRL B-4536 / VPI 7372) (Clostridium thermocellum), this protein is Ribosome maturation factor RimM.